The chain runs to 144 residues: Ribosomal RNA large subunit methyltransferase H (144 aa).

S-adenosyl-L-methionine is bound by residues leucine 63, glycine 92, and 111-116 (LSPLTF).

It belongs to the RNA methyltransferase RlmH family. As to quaternary structure, homodimer.

Its subcellular location is the cytoplasm. The enzyme catalyses pseudouridine(1915) in 23S rRNA + S-adenosyl-L-methionine = N(3)-methylpseudouridine(1915) in 23S rRNA + S-adenosyl-L-homocysteine + H(+). Its function is as follows. Specifically methylates the pseudouridine at position 1915 (m3Psi1915) in 23S rRNA. The sequence is that of Ribosomal RNA large subunit methyltransferase H from Synechococcus sp. (strain CC9902).